The chain runs to 348 residues: Dihydroorotase (348 aa).

Zn(2+)-binding residues include histidine 17 and histidine 19. Substrate is bound by residues 19–21 and asparagine 45; that span reads HLR. Residues lysine 103, histidine 140, and histidine 178 each coordinate Zn(2+). At lysine 103 the chain carries N6-carboxylysine. Histidine 140 lines the substrate pocket. Residue leucine 223 coordinates substrate. Zn(2+) is bound at residue aspartate 251. Aspartate 251 is an active-site residue. Positions 255 and 267 each coordinate substrate.

Belongs to the metallo-dependent hydrolases superfamily. DHOase family. Class II DHOase subfamily. As to quaternary structure, homodimer. Zn(2+) is required as a cofactor.

The catalysed reaction is (S)-dihydroorotate + H2O = N-carbamoyl-L-aspartate + H(+). It participates in pyrimidine metabolism; UMP biosynthesis via de novo pathway; (S)-dihydroorotate from bicarbonate: step 3/3. In terms of biological role, catalyzes the reversible cyclization of carbamoyl aspartate to dihydroorotate. The chain is Dihydroorotase from Escherichia coli O6:H1 (strain CFT073 / ATCC 700928 / UPEC).